The primary structure comprises 363 residues: Phosphoserine aminotransferase (363 aa).

R46 is an L-glutamate binding site. Pyridoxal 5'-phosphate-binding positions include 80–81 (AT), W106, T156, D176, and Q199. At K200 the chain carries N6-(pyridoxal phosphate)lysine. 241-242 (NT) provides a ligand contact to pyridoxal 5'-phosphate.

Belongs to the class-V pyridoxal-phosphate-dependent aminotransferase family. SerC subfamily. In terms of assembly, homodimer. Requires pyridoxal 5'-phosphate as cofactor.

Its subcellular location is the cytoplasm. The enzyme catalyses O-phospho-L-serine + 2-oxoglutarate = 3-phosphooxypyruvate + L-glutamate. The catalysed reaction is 4-(phosphooxy)-L-threonine + 2-oxoglutarate = (R)-3-hydroxy-2-oxo-4-phosphooxybutanoate + L-glutamate. It functions in the pathway amino-acid biosynthesis; L-serine biosynthesis; L-serine from 3-phospho-D-glycerate: step 2/3. Its pathway is cofactor biosynthesis; pyridoxine 5'-phosphate biosynthesis; pyridoxine 5'-phosphate from D-erythrose 4-phosphate: step 3/5. In terms of biological role, catalyzes the reversible conversion of 3-phosphohydroxypyruvate to phosphoserine and of 3-hydroxy-2-oxo-4-phosphonooxybutanoate to phosphohydroxythreonine. This Leptospira interrogans serogroup Icterohaemorrhagiae serovar copenhageni (strain Fiocruz L1-130) protein is Phosphoserine aminotransferase.